A 473-amino-acid polypeptide reads, in one-letter code: Photosystem II CP43 reaction center protein (473 aa).

The propeptide occupies 1–14 (MKTLYSLRRFYHVE). Thr15 is subject to N-acetylthreonine. At Thr15 the chain carries Phosphothreonine. Helical transmembrane passes span 69–93 (LFEVAHFVPEKPMYEQGLILLPHLA), 134–155 (LLGPETLEESFPFFGYVWKDRN), 178–200 (KALYFGGVYDTWAPGGGDVRKIT), 255–275 (KPFAWARRALVWSGEAYLSYS), and 291–312 (WFNNTAYPSEFYGPTGPEASQA). Glu367 contributes to the [CaMn4O5] cluster binding site. The chain crosses the membrane as a helical span at residues 447–471 (RARAAAAGFEKGIDRDFEPVLSMTP).

This sequence belongs to the PsbB/PsbC family. PsbC subfamily. As to quaternary structure, PSII is composed of 1 copy each of membrane proteins PsbA, PsbB, PsbC, PsbD, PsbE, PsbF, PsbH, PsbI, PsbJ, PsbK, PsbL, PsbM, PsbT, PsbX, PsbY, PsbZ, Psb30/Ycf12, at least 3 peripheral proteins of the oxygen-evolving complex and a large number of cofactors. It forms dimeric complexes. Binds multiple chlorophylls and provides some of the ligands for the Ca-4Mn-5O cluster of the oxygen-evolving complex. It may also provide a ligand for a Cl- that is required for oxygen evolution. PSII binds additional chlorophylls, carotenoids and specific lipids. serves as cofactor.

It localises to the plastid. The protein resides in the chloroplast thylakoid membrane. One of the components of the core complex of photosystem II (PSII). It binds chlorophyll and helps catalyze the primary light-induced photochemical processes of PSII. PSII is a light-driven water:plastoquinone oxidoreductase, using light energy to abstract electrons from H(2)O, generating O(2) and a proton gradient subsequently used for ATP formation. The protein is Photosystem II CP43 reaction center protein of Aethionema cordifolium (Lebanon stonecress).